The chain runs to 89 residues: Phosphoribulokinase, chloroplastic (89 aa).

Residues 1 to 22 (LTSVFGGAAEPPRGGNPDSNTL) are disordered.

This sequence belongs to the phosphoribulokinase family.

The protein resides in the plastid. It localises to the chloroplast. The catalysed reaction is D-ribulose 5-phosphate + ATP = D-ribulose 1,5-bisphosphate + ADP + H(+). It functions in the pathway carbohydrate biosynthesis; Calvin cycle. Its activity is regulated as follows. Light regulated via thioredoxin by reversible oxidation/reduction of sulfhydryl/disulfide groups. The sequence is that of Phosphoribulokinase, chloroplastic from Vitis sp. (Grape).